Here is an 858-residue protein sequence, read N- to C-terminus: KN motif and ankyrin repeat domain-containing protein 2 (858 aa).

The segment at 1–29 is disordered; the sequence is MAQVLHVSAPFPGTPGPASPPAFPSKEPD. The segment at 1–72 is interaction with AIFM1; it reads MAQVLHVSAP…AVQRRPRLGS (72 aa). The span at 12–23 shows a compositional bias: pro residues; sequence PGTPGPASPPAF. Phosphoserine is present on residues Ser19, Ser83, Ser86, Ser89, and Ser92. Arg105 carries the omega-N-methylarginine modification. Positions 140–182 are disordered; sequence AAPAGLGSLTPSAAGSTSSLVGVGLPPPTPRGSGLSTPVPPSA. Residues 148–159 are compositionally biased toward polar residues; it reads LTPSAAGSTSSL. Residue Thr168 is modified to Phosphothreonine. Coiled coils occupy residues 183 to 234 and 282 to 313; these read GHLA…KSQK and EAALAAKVAVLETQLKKALQELQAAQARQADL. Ser323 is subject to Phosphoserine. Position 329 is a phosphothreonine (Thr329). 2 positions are modified to phosphoserine: Ser356 and Ser375. 2 disordered regions span residues 412 to 451 and 488 to 590; these read CDGAAGHPQAPAESSLSPPESEGATQAQPEKNTGQVPAHD and QKEE…SSAK. The segment covering 421–435 has biased composition (low complexity); sequence APAESSLSPPESEGA. Positions 436–446 are enriched in polar residues; that stretch reads TQAQPEKNTGQ. Residues 488-499 are compositionally biased toward basic and acidic residues; that stretch reads QKEEPTDPEAHR. The span at 509-528 shows a compositional bias: low complexity; that stretch reads GSISPRYESSSEDSSTAENF. Position 547 is a phosphoserine (Ser547). Positions 555 to 569 are enriched in basic and acidic residues; that stretch reads RPKETAKAKTSREES. Thr559 bears the Phosphothreonine mark. Residues 621–658 form an ANK 0; degenerate repeat; sequence RELKVAYTTVLQEWLRLACRSDAHPELVRRHLVTFRAM. 5 ANK repeats span residues 673–703, 707–740, 745–774, 778–808, and 812–842; these read NGNTALHYSVSHANFPVVQQLLDSGVCQVDK, AGYSPIMLTALATLKTQDDIQTILQLFRLGDVNA, AGQTALMLAVSHGRVDVVKALLACEADVNV, DGSTALMCACEHGHKEITALLLAVPSCDISI, and DGSTALMVALDAGHSEIASMLYSRMNIKCSF. The interaction with NCOA1 stretch occupies residues 676 to 842; that stretch reads TALHYSVSHA…YSRMNIKCSF (167 aa).

As to quaternary structure, interacts (non-phosphorylated form) with NCOA1; NCOA2 AND NCOA3. Interacts with AIFM1. Interacts with ARHGDIA; the interaction is direct and may regulate the interaction of ARHGDIA with RHOA, RAC1 and CDC42. Interacts (via ANK repeats 1-5) with KIF21A. Phosphorylated by casein kinase II upon estrogen stimulation. Phosphorylation induces the release by KANK2 of NCOA1 and its translocation to the nucleus where NCOA1 can activate gene transcription.

Its subcellular location is the cytoplasm. The protein resides in the mitochondrion. Involved in transcription regulation by sequestering in the cytoplasm nuclear receptor coactivators such as NCOA1, NCOA2 and NCOA3. Involved in regulation of caspase-independent apoptosis by sequestering the proapoptotic factor AIFM1 in mitochondria. Pro-apoptotic stimuli can induce its proteasomal degradation allowing the translocation of AIFM1 to the nucleus to induce apoptosis. Involved in the negative control of vitamin D receptor signaling pathway. Involved in actin stress fibers formation through its interaction with ARHGDIA and the regulation of the Rho signaling pathway. May thereby play a role in cell adhesion and migration, regulating for instance podocytes migration during development of the kidney. Through the Rho signaling pathway may also regulate cell proliferation. This Bos taurus (Bovine) protein is KN motif and ankyrin repeat domain-containing protein 2 (KANK2).